A 248-amino-acid chain; its full sequence is Ras-like protein family member 11B (248 aa).

The interval 30-248 (ASSRVIKIAV…SSKVRTATSV (219 aa)) is small GTPase-like. GTP contacts are provided by residues 41–48 (GGSGVGKT), 88–99 (DTPGVQINEQNL), and 153–156 (NKAD). Residues 206-228 (QNTGTSERRKNSIIPRPKSPNMQ) form a disordered region.

This sequence belongs to the small GTPase superfamily. Ras family.

The catalysed reaction is GTP + H2O = GDP + phosphate + H(+). The protein is Ras-like protein family member 11B of Xenopus laevis (African clawed frog).